The following is a 148-amino-acid chain: Large ribosomal subunit protein bL9 (148 aa).

Belongs to the bacterial ribosomal protein bL9 family.

Its function is as follows. Binds to the 23S rRNA. The sequence is that of Large ribosomal subunit protein bL9 from Chloroflexus aurantiacus (strain ATCC 29366 / DSM 635 / J-10-fl).